The sequence spans 254 residues: Putative biopolymer transport protein ExbB-like 1 (254 aa).

The next 3 helical transmembrane spans lie at glycine 39–glutamate 59, leucine 141–isoleucine 161, and isoleucine 185–valine 205.

The protein belongs to the ExbB/TolQ family.

It localises to the cell inner membrane. Functionally, involved in the TonB-dependent energy-dependent transport of various receptor-bound substrates. Protects ExbD from proteolytic degradation and functionally stabilizes TonB. The chain is Putative biopolymer transport protein ExbB-like 1 from Synechocystis sp. (strain ATCC 27184 / PCC 6803 / Kazusa).